Reading from the N-terminus, the 179-residue chain is Ribosome-recycling factor (179 aa).

It belongs to the RRF family.

It localises to the cytoplasm. Its function is as follows. Responsible for the release of ribosomes from messenger RNA at the termination of protein biosynthesis. May increase the efficiency of translation by recycling ribosomes from one round of translation to another. In Chlamydia muridarum (strain MoPn / Nigg), this protein is Ribosome-recycling factor.